The chain runs to 363 residues: Zinc finger protein 830 (363 aa).

Ala2 carries the N-acetylalanine modification. Residues 16–40 (VNQEELRRLMREKQRLSTNRKRIES) adopt a coiled-coil conformation. A C2H2-type zinc finger spans residues 53 to 75 (CALCNTPVKSELLWQTHVLGKQH). The tract at residues 81–213 (ELKGAKGATQ…NPPKAPLVPH (133 aa)) is disordered. The span at 90 to 99 (QGPSTGTVPQ) shows a compositional bias: polar residues. The segment covering 104–115 (RATDVESQDAKK) has biased composition (basic and acidic residues). Residues 129 to 143 (SASSANLDAARAAPS) show a composition bias toward low complexity. Positions 152 to 164 (DYDDEEEEEEEGG) are enriched in acidic residues. Over residues 165 to 184 (GEERRDSSKHLPDAQGKEHS) the composition is skewed to basic and acidic residues. Residues 189–205 (RETTSNVLPNDPFNTNP) show a composition bias toward polar residues. Ser216 carries the post-translational modification Phosphoserine. Residues 303 to 331 (IECYRRVEKLRNRQDEIKNKLKEVLTIKE) adopt a coiled-coil conformation. A phosphoserine mark is found at Ser342 and Ser353.

In terms of assembly, component of the XAB2 complex, a multimeric protein complex composed of XAB2, PRPF19, AQR, ZNF830, ISY1, and PPIE; this complex binds preferentially to RNA. Interacts with XAB2. Identified in a pentameric intron-binding (IB) complex composed of AQR, XAB2, ISY1, ZNF830 and PPIE that is incorporated into the spliceosome as a preassembled complex. The IB complex does not contain PRPF19. Phosphorylated in response to DNA damage by the cell cycle checkpoint kinases ATR/ATM. As to expression, widely expressed at low level. Expressed in oocytes from primordial to antral follicles. Also detected in somatic cells of the ovary, namely, in granulosa cells from the pre-antral follicle stage onward.

The protein resides in the nucleus. It localises to the chromosome. Its subcellular location is the nucleus speckle. Its function is as follows. May play a role in pre-mRNA splicing as component of the spliceosome. Acts as an important regulator of the cell cycle that participates in the maintenance of genome integrity. During cell cycle progression in embryonic fibroblast, prevents replication fork collapse, double-strand break formation and cell cycle checkpoint activation. Controls mitotic cell cycle progression and cell survival in rapidly proliferating intestinal epithelium and embryonic stem cells. During the embryo preimplantation, controls different aspects of M phase. During early oocyte growth, plays a role in oocyte survival by preventing chromosomal breaks formation, activation of TP63 and reduction of transcription. This Mus musculus (Mouse) protein is Zinc finger protein 830.